Reading from the N-terminus, the 213-residue chain is uncharacterized protein (213 aa).

Catalysis depends on charge relay system residues S114, D162, and H194.

This sequence belongs to the AB hydrolase superfamily. AB hydrolase 2 family.

This is an uncharacterized protein from Rickettsia bellii (strain RML369-C).